The primary structure comprises 990 residues: Bifunctional glutamine synthetase adenylyltransferase/adenylyl-removing enzyme (990 aa).

Residues 1–474 form an adenylyl removase region; the sequence is MIFSAITADL…HYAKLFEGDP (474 aa). The segment at 478–990 is adenylyl transferase; the sequence is AKLPPVDYGA…FSRLIGGEDA (513 aa).

Belongs to the GlnE family. Mg(2+) is required as a cofactor.

It carries out the reaction [glutamine synthetase]-O(4)-(5'-adenylyl)-L-tyrosine + phosphate = [glutamine synthetase]-L-tyrosine + ADP. The enzyme catalyses [glutamine synthetase]-L-tyrosine + ATP = [glutamine synthetase]-O(4)-(5'-adenylyl)-L-tyrosine + diphosphate. Involved in the regulation of glutamine synthetase GlnA, a key enzyme in the process to assimilate ammonia. When cellular nitrogen levels are high, the C-terminal adenylyl transferase (AT) inactivates GlnA by covalent transfer of an adenylyl group from ATP to specific tyrosine residue of GlnA, thus reducing its activity. Conversely, when nitrogen levels are low, the N-terminal adenylyl removase (AR) activates GlnA by removing the adenylyl group by phosphorolysis, increasing its activity. The regulatory region of GlnE binds the signal transduction protein PII (GlnB) which indicates the nitrogen status of the cell. The chain is Bifunctional glutamine synthetase adenylyltransferase/adenylyl-removing enzyme from Rhodopseudomonas palustris (strain ATCC BAA-98 / CGA009).